The chain runs to 477 residues: Endogenous retrovirus group V member 1 Env polyprotein (477 aa).

A signal peptide spans 1–21 (MTEKFLFLYLSLLPMPLLSQA). The Extracellular portion of the chain corresponds to 22–321 (QWNENSLVSF…NTTQPRQKRA (300 aa)). Residue Asn-68 is glycosylated (N-linked (GlcNAc...) asparagine). Residues 322–342 (LGLILAGMGAAIGMIAPWGGF) form a helical membrane-spanning segment. Over 343–477 (TYHDVTLRNL…LLSPLWPLSL (135 aa)) the chain is Cytoplasmic.

Belongs to the gamma type-C retroviral envelope protein family. As to expression, expressed in placenta.

Its subcellular location is the membrane. The sequence is that of Endogenous retrovirus group V member 1 Env polyprotein (ERVV-1) from Homo sapiens (Human).